A 172-amino-acid polypeptide reads, in one-letter code: Ribosome maturation factor RimM (172 aa).

Residues 96-170 (EENEFYFHEI…KITIEVMEGL (75 aa)) enclose the PRC barrel domain.

The protein belongs to the RimM family. As to quaternary structure, binds ribosomal protein uS19.

It is found in the cytoplasm. Functionally, an accessory protein needed during the final step in the assembly of 30S ribosomal subunit, possibly for assembly of the head region. Essential for efficient processing of 16S rRNA. May be needed both before and after RbfA during the maturation of 16S rRNA. It has affinity for free ribosomal 30S subunits but not for 70S ribosomes. This is Ribosome maturation factor RimM from Listeria monocytogenes serotype 4b (strain CLIP80459).